Consider the following 302-residue polypeptide: Monopolin complex subunit MAM1 (302 aa).

Disordered stretches follow at residues 53-83 (YHKE…QNNV) and 257-276 (TSEN…SKGK). Positions 257-268 (TSENPFSSSPNT) are enriched in polar residues.

In terms of assembly, component of the monopolin complex composed of at least CSM1, LRS4 and MAM1. The complex associates with the kinetochore during late pachytene. Post-translationally, phosphorylated by CDC5. This phosphorylation is required for the location to the kinetochores during late pachytene.

The protein localises to the nucleus. Its function is as follows. Component of the monopolin complex which promotes monoorientation during meiosis I, required for chromosome segregation during meiosis. The sequence is that of Monopolin complex subunit MAM1 (MAM1) from Saccharomyces cerevisiae (strain ATCC 204508 / S288c) (Baker's yeast).